The primary structure comprises 125 residues: Large ribosomal subunit protein bL12 (125 aa).

Belongs to the bacterial ribosomal protein bL12 family. Homodimer. Part of the ribosomal stalk of the 50S ribosomal subunit. Forms a multimeric L10(L12)X complex, where L10 forms an elongated spine to which 2 to 4 L12 dimers bind in a sequential fashion. Binds GTP-bound translation factors.

Its function is as follows. Forms part of the ribosomal stalk which helps the ribosome interact with GTP-bound translation factors. Is thus essential for accurate translation. In Chelativorans sp. (strain BNC1), this protein is Large ribosomal subunit protein bL12.